Consider the following 258-residue polypeptide: Glutamate racemase (258 aa).

Residues 12–13 (DS) and 44–45 (YG) contribute to the substrate site. The Proton donor/acceptor role is filled by C75. 76–77 (NT) is a substrate binding site. Residue C186 is the Proton donor/acceptor of the active site. Position 187 to 188 (187 to 188 (TH)) interacts with substrate.

This sequence belongs to the aspartate/glutamate racemases family.

It carries out the reaction L-glutamate = D-glutamate. It functions in the pathway cell wall biogenesis; peptidoglycan biosynthesis. Functionally, provides the (R)-glutamate required for cell wall biosynthesis. The chain is Glutamate racemase from Clostridium botulinum (strain Alaska E43 / Type E3).